A 640-amino-acid chain; its full sequence is Calpain-5 (640 aa).

Residues 26–343 form the Calpain catalytic domain; that stretch reads LFEDPLFPAT…FTDIIKCRLI (318 aa). Residues Cys81, His252, and Asn284 contribute to the active site. The segment at 344–496 is domain III; that stretch reads NTSYLSIHKT…VFTDVPSNCR (153 aa). One can recognise a C2 domain in the interval 499-617; sequence RLDEPPRTCW…HTLHLQDRSS (119 aa).

It belongs to the peptidase C2 family.

Functionally, calcium-regulated non-lysosomal thiol-protease. In Mus musculus (Mouse), this protein is Calpain-5 (Capn5).